The following is a 370-amino-acid chain: uncharacterized protein (370 aa).

An OBG-type G domain is found at Ala62–Gly293. Residues Gly68–Ser75, Asp114–Leu118, and Asn243–Asp246 contribute to the GTP site. Residues Gly293–Ala368 form the TGS domain.

This sequence belongs to the TRAFAC class OBG-HflX-like GTPase superfamily. OBG GTPase family.

This is an uncharacterized protein from Halobacterium salinarum (strain ATCC 700922 / JCM 11081 / NRC-1) (Halobacterium halobium).